We begin with the raw amino-acid sequence, 305 residues long: Homoserine kinase (305 aa).

90–100 serves as a coordination point for ATP; the sequence is PLARGLGSSAS.

The protein belongs to the GHMP kinase family. Homoserine kinase subfamily.

It localises to the cytoplasm. It carries out the reaction L-homoserine + ATP = O-phospho-L-homoserine + ADP + H(+). It participates in amino-acid biosynthesis; L-threonine biosynthesis; L-threonine from L-aspartate: step 4/5. In terms of biological role, catalyzes the ATP-dependent phosphorylation of L-homoserine to L-homoserine phosphate. The sequence is that of Homoserine kinase from Staphylococcus saprophyticus subsp. saprophyticus (strain ATCC 15305 / DSM 20229 / NCIMB 8711 / NCTC 7292 / S-41).